The chain runs to 179 residues: Adenylyl-sulfate kinase (179 aa).

Residue 13–20 (GLSGAGKS) participates in ATP binding. The Phosphoserine intermediate role is filled by S87.

Belongs to the APS kinase family.

It catalyses the reaction adenosine 5'-phosphosulfate + ATP = 3'-phosphoadenylyl sulfate + ADP + H(+). It participates in sulfur metabolism; hydrogen sulfide biosynthesis; sulfite from sulfate: step 2/3. Its function is as follows. Catalyzes the synthesis of activated sulfate. In Paraburkholderia xenovorans (strain LB400), this protein is Adenylyl-sulfate kinase.